The chain runs to 1322 residues: MNDGENYWNAFRSHKRSATDGPTLSPWMVTVLQATKLLLFALCNIVLTLGSVFSKLIVLIMATNIVPRAHLIGKFARKCTKAAVRRTSTTTAGIYLSLLLIQCFPDTINLIRSGIDMWKGQCGQLVKSVVVLESLRAIGLAVLSFHVFPQLDLARCLVLSACFPLVAVLQRSLVAMVSAARTGRSFRNRLGRCFVAIPHVIMFLVLMSSCYVWALFDNKFTAIIALPIGVICTSAGFWESWIDTTHSGTSFDELYRLKYAVRKMNTTTKLIVSLMRIVCTVSVLVSAVYINDHKKLNSSHFVKAFFSFSTRQPHTRLLLLATGIIVLHFVMRGISRFLAALDLHPFSFVHPLSIAPLIAYGYVRYACQSPTCSIARRLARFGLHWVCDQWFQSARGIASPDFYICLIWLLVGCYRGWRLVRQRYFDTNEEIISSMPPVCNGLCIEQSLVVFQHSLNRQEKTMLTEEEDISDENDELRIRNDEVDRVSTVYGCATMWHETETEMRQVLRSILKLDVDHATRMNNKKANELRYRLEGHIFFDDAWEDVEEDGIEKRQPNEYFNMFFDLLNEMTGERLNEEGKMETRILVNTPYGGRLVVKLPSGTLLFVHLKDKKMIRHKKRWSQVMYMYYLLGHRIMDCPLSIEDRQQMADNTFILAIDGDSKFEPDALLRLLHLMNAKSDIGCACGRIHPIGNGIMVWYQKFEYAIAHWFQKAAEHVFGCVLCAPGCFSLFRASALMDDNIMHKYTKTASEPRHYVQYDQGEDRWLSTLLLKQGYRIEYAAASDAETYAPEGFEEFFNQRRRWTPSSIANTVDLLMDYKRASENNDAISYAYIAYQFLVIFFSMLGPAIIFTMLVFAQVAAFELRGSDVMLYNGIPIGFFIVLCFTTESNIQLIYAKYMSIAYAFVMLAVLVATSSQIVLETVLAPTSLFIVTMVGIFFFAACLHPKEFTNIIHGVVFFLMIPSTYVFLTLYSLINLNVITWGTREAVAKATGQKTKKAPMEQFIDRVIDIVKKGFRLISCREKKEHEERREKMEKKMQRMELALRSIESGADVKKILDATEEKEKREEETQTADFPIEENVEKTQKEIQKANRYVWMTSHSLKVCERGKLKSAEKVFWNELINAYLKPIKTTPAEMKAVAEGLASLRNQIAFTILLVNSLLALAIFLIQKHKNVLSIKFSPIKNFRWTKMNEMTGQYEETDEPLKIDPLGMGIVVFLLIILFVQTLGMLLHRLNTMIGAFQEVKNLYEYGVSPVINTKNDDERIMNNARLMINSLGVSTGHAADGYTRHRGEESDTGNVLYKLQKARLAKRMQRSALSTTE.

Residues 1–39 are Extracellular-facing; the sequence is MNDGENYWNAFRSHKRSATDGPTLSPWMVTVLQATKLLL. Residues 40 to 60 traverse the membrane as a helical segment; sequence FALCNIVLTLGSVFSKLIVLI. The Cytoplasmic portion of the chain corresponds to 61-128; the sequence is MATNIVPRAH…KGQCGQLVKS (68 aa). The chain crosses the membrane as a helical span at residues 129–149; that stretch reads VVVLESLRAIGLAVLSFHVFP. Residues 150–156 are Extracellular-facing; the sequence is QLDLARC. The chain crosses the membrane as a helical span at residues 157 to 177; it reads LVLSACFPLVAVLQRSLVAMV. The Cytoplasmic portion of the chain corresponds to 178 to 193; sequence SAARTGRSFRNRLGRC. Residues 194–214 traverse the membrane as a helical segment; the sequence is FVAIPHVIMFLVLMSSCYVWA. Topologically, residues 215-221 are extracellular; the sequence is LFDNKFT. A helical membrane pass occupies residues 222-242; sequence AIIALPIGVICTSAGFWESWI. Topologically, residues 243 to 269 are cytoplasmic; that stretch reads DTTHSGTSFDELYRLKYAVRKMNTTTK. Residues 270 to 290 traverse the membrane as a helical segment; that stretch reads LIVSLMRIVCTVSVLVSAVYI. Over 291–316 the chain is Extracellular; the sequence is NDHKKLNSSHFVKAFFSFSTRQPHTR. An N-linked (GlcNAc...) asparagine glycan is attached at Asn-297. A helical transmembrane segment spans residues 317–337; sequence LLLLATGIIVLHFVMRGISRF. The Cytoplasmic portion of the chain corresponds to 338–342; sequence LAALD. A helical membrane pass occupies residues 343–363; that stretch reads LHPFSFVHPLSIAPLIAYGYV. The Extracellular segment spans residues 364–396; sequence RYACQSPTCSIARRLARFGLHWVCDQWFQSARG. Residues 397–417 form a helical membrane-spanning segment; that stretch reads IASPDFYICLIWLLVGCYRGW. At 418–836 the chain is on the cytoplasmic side; that stretch reads RLVRQRYFDT…AISYAYIAYQ (419 aa). Residues 455–486 adopt a coiled-coil conformation; sequence LNRQEKTMLTEEEDISDENDELRIRNDEVDRV. The helical transmembrane segment at 837–857 threads the bilayer; sequence FLVIFFSMLGPAIIFTMLVFA. Residues 858–865 lie on the Extracellular side of the membrane; the sequence is QVAAFELR. A helical transmembrane segment spans residues 866-886; that stretch reads GSDVMLYNGIPIGFFIVLCFT. Residues 887-892 lie on the Cytoplasmic side of the membrane; the sequence is TESNIQ. Residues 893 to 913 traverse the membrane as a helical segment; that stretch reads LIYAKYMSIAYAFVMLAVLVA. Over 914–922 the chain is Extracellular; sequence TSSQIVLET. The helical transmembrane segment at 923–943 threads the bilayer; sequence VLAPTSLFIVTMVGIFFFAAC. At 944–951 the chain is on the cytoplasmic side; the sequence is LHPKEFTN. The chain crosses the membrane as a helical span at residues 952 to 972; the sequence is IIHGVVFFLMIPSTYVFLTLY. Residues 973–1148 lie on the Extracellular side of the membrane; that stretch reads SLINLNVITW…AVAEGLASLR (176 aa). The stretch at 1019–1053 forms a coiled coil; it reads ISCREKKEHEERREKMEKKMQRMELALRSIESGAD. Residues 1149–1169 form a helical membrane-spanning segment; it reads NQIAFTILLVNSLLALAIFLI. The Cytoplasmic segment spans residues 1170–1209; it reads QKHKNVLSIKFSPIKNFRWTKMNEMTGQYEETDEPLKIDP. Residues 1210-1230 form a helical membrane-spanning segment; it reads LGMGIVVFLLIILFVQTLGML. Residues 1231–1322 are Extracellular-facing; sequence LHRLNTMIGA…MQRSALSTTE (92 aa).

It belongs to the chitin synthase family. Class IV subfamily.

Its subcellular location is the cell membrane. The catalysed reaction is [(1-&gt;4)-N-acetyl-beta-D-glucosaminyl](n) + UDP-N-acetyl-alpha-D-glucosamine = [(1-&gt;4)-N-acetyl-beta-D-glucosaminyl](n+1) + UDP + H(+). Essential for the embryonic synthesis of chitin, a component of the eggshell. This Caenorhabditis elegans protein is Chitin synthase chs-1.